Here is a 272-residue protein sequence, read N- to C-terminus: tRNA pseudouridine synthase B (272 aa).

Asp38 serves as the catalytic Nucleophile.

Belongs to the pseudouridine synthase TruB family. Type 1 subfamily.

It catalyses the reaction uridine(55) in tRNA = pseudouridine(55) in tRNA. In terms of biological role, responsible for synthesis of pseudouridine from uracil-55 in the psi GC loop of transfer RNAs. The polypeptide is tRNA pseudouridine synthase B (Campylobacter jejuni subsp. jejuni serotype O:6 (strain 81116 / NCTC 11828)).